Here is a 671-residue protein sequence, read N- to C-terminus: tRNA(Met) cytidine acetyltransferase TmcA (671 aa).

ATP contacts are provided by residues Q180, 202–211 (GRGKSALAGQ), and R319. The N-acetyltransferase domain maps to 356-531 (QTLWQSDPET…SGCYTAMALL (176 aa)). Residues 461 to 463 (IAV), 468 to 474 (QREGTGR), E499, and R506 each bind acetyl-CoA.

The protein belongs to the RNA cytidine acetyltransferase family. TmcA subfamily.

The protein resides in the cytoplasm. It carries out the reaction cytidine(34) in elongator tRNA(Met) + acetyl-CoA + ATP + H2O = N(4)-acetylcytidine(34) in elongator tRNA(Met) + ADP + phosphate + CoA + H(+). It catalyses the reaction 2-hydroxyisobutanoyl-CoA + L-lysyl-[protein] = N(6)-(2-hydroxyisobutanoyl)-L-lysyl-[protein] + CoA + H(+). ATP/GTP hydrolysis is stimulated by the addition of acetyl-CoA and tRNA(Met). Binding of acetyl-CoA to TmcA activates both ATPase and tRNA-binding activities. ATP promotes the 2-hydroxyisobutyryltransferase activity. Its function is as follows. Catalyzes the formation of N(4)-acetylcytidine (ac(4)C) at the wobble position of tRNA(Met), by using acetyl-CoA as an acetyl donor and ATP (or GTP). It recognizes the wobble base of tRNA(Met), thus distinguishing between tRNA(Met) and the structurally similar tRNA(Ile2). Could use an RNA helicase motor driven by ATP hydrolysis to deliver the wobble base of tRNA(Met) to the acetyltransferase domain of TmcA. Also functions as a lysine 2-hydroxyisobutyryltransferase to regulate transcription. Can specifically catalyze the 2-hydroxyisobutyrylation (Khib) of the DNA-binding protein H-NS. Hydroxyisobutyrylation of H-NS decreases its DNA-binding activity, promotes the expression of acid-resistance genes and enhances bacterial survival under extreme acid stress. The chain is tRNA(Met) cytidine acetyltransferase TmcA from Escherichia coli (strain K12).